The primary structure comprises 143 residues: Monothiol glutaredoxin-5, mitochondrial (143 aa).

The transit peptide at 1 to 28 (MFGRISTRALLRPAFTHRIPSVSLSRFL) directs the protein to the mitochondrion. One can recognise a Glutaredoxin domain in the interval 33-138 (KQAIESAIES…KLLEDADALV (106 aa)). Glutathione is bound at residue lysine 50. Residue cysteine 58 coordinates [2Fe-2S] cluster. Residues 90 to 94 (REGVK), isoleucine 102, and 115 to 116 (CD) each bind glutathione.

This sequence belongs to the glutaredoxin family. Monothiol subfamily. As to quaternary structure, homodimer.

The protein localises to the mitochondrion matrix. Functionally, monothiol glutaredoxin involved in mitochondrial iron-sulfur (Fe/S) cluster transfer. Receives iron-sulfur clusters from scaffold protein ISU1 and mediates their transfer to apoproteins, to the 4Fe/FS cluster biosynthesis machinery, or export from mitochondrion. The chain is Monothiol glutaredoxin-5, mitochondrial (GRX5) from Lachancea kluyveri (Yeast).